The following is a 331-amino-acid chain: Nucleotide sugar transporter SLC35B4 (331 aa).

The next 11 membrane-spanning stretches (helical) occupy residues 4–24, 30–50, 59–79, 92–112, 124–144, 153–173, 201–221, 229–249, 251–267, 268–288, and 294–314; these read AFAV…LELL, GCGN…GFLF, PAIP…VSVV, LHMI…IIIL, IALV…QVTV, GFQA…ALLM, ALPL…VVLF, VPVI…NVVT, YVCI…CTSL, TVTL…ILYF, and MWHW…TEVW. A Mediates endoplasmic reticulum retention motif is present at residues 326–331; sequence KDDKKD.

Belongs to the nucleotide-sugar transporter family. SLC35B subfamily.

It is found in the endoplasmic reticulum membrane. The enzyme catalyses UDP-N-acetyl-alpha-D-glucosamine(in) + UDP-alpha-D-glucuronate(out) = UDP-N-acetyl-alpha-D-glucosamine(out) + UDP-alpha-D-glucuronate(in). The catalysed reaction is UDP-alpha-D-xylose(in) + UDP-alpha-D-glucuronate(out) = UDP-alpha-D-xylose(out) + UDP-alpha-D-glucuronate(in). In terms of biological role, antiporter that transports nucleotide sugars across the endoplasmic reticulum (ER) membrane in exchange for another nucleotide sugar. May couple UDP-alpha-D-glucuronate (UDP-GlcA) or UDP-alpha-D-xylose (UDP-Xyl) efflux to UDP-alpha-D-glucuronate (UDP-GlcA) influx into the ER lumen, which in turn stimulates glucuronidation and excretion of endobiotics and xenobiotics. In Mus musculus (Mouse), this protein is Nucleotide sugar transporter SLC35B4 (Slc35b4).